Reading from the N-terminus, the 348-residue chain is Rhodopsin (348 aa).

Met-1 carries the N-acetylmethionine modification. Over Met-1 to Gln-36 the chain is Extracellular. Asn-2 and Asn-15 each carry an N-linked (GlcNAc...) asparagine glycan. A helical membrane pass occupies residues Phe-37–Val-61. At Thr-62 to Asn-73 the chain is on the cytoplasmic side. The chain crosses the membrane as a helical span at residues Tyr-74–Tyr-96. The Extracellular portion of the chain corresponds to Thr-97–Cys-110. A disulfide bond links Cys-110 and Cys-187. A helical transmembrane segment spans residues Asn-111 to Ile-133. Positions Glu-134–Tyr-136 match the 'Ionic lock' involved in activated form stabilization motif. At Glu-134–His-152 the chain is on the cytoplasmic side. A helical membrane pass occupies residues Ala-153–Val-173. The Extracellular portion of the chain corresponds to Gly-174–Ser-202. Glu-201 serves as a coordination point for Zn(2+). Residues Phe-203–Gly-224 traverse the membrane as a helical segment. Residues Gln-225–Arg-252 are Cytoplasmic-facing. Residues Met-253 to Tyr-274 traverse the membrane as a helical segment. At Ile-275 to Ile-286 the chain is on the extracellular side. Gln-279 contributes to the Zn(2+) binding site. A helical membrane pass occupies residues Phe-287–Met-308. Lys-296 bears the N6-(retinylidene)lysine mark. The Cytoplasmic segment spans residues Met-309–Ala-348. S-palmitoyl cysteine attachment occurs at residues Cys-322 and Cys-323. The interval Asp-330–Ala-348 is interaction with SAG. The residue at position 334 (Ser-334) is a Phosphoserine. 2 positions are modified to phosphothreonine: Thr-335 and Thr-336. At Ser-338 the chain carries Phosphoserine. Thr-340 and Thr-342 each carry phosphothreonine. Ser-343 bears the Phosphoserine mark.

It belongs to the G-protein coupled receptor 1 family. Opsin subfamily. As to quaternary structure, homodimer. May form a complex composed of RHO, GRK1 and RCVRN in a Ca(2+)-dependent manner; RCVRN prevents the interaction between GRK1 and RHO. Interacts with GRK1. Interacts (phosphorylated form) with SAG. Interacts with GNAT1. Interacts with GNAT3. SAG and G-proteins compete for a common binding site. Interacts with PRCD; the interaction promotes PRCD stability. Forms a complex with ASAP1 and ARF4. Forms a complex with ASAP1, RAB11A, Rabin8/RAB3IP, ARF4 and RAB11FIP3; the complex regulates Golgi-to-cilia rhodopsin/RHO transport in photoreceptors. Phosphorylated on some or all of the serine and threonine residues present in the C-terminal region. In terms of processing, contains one covalently linked retinal chromophore. Upon light absorption, the covalently bound 11-cis-retinal is converted to all-trans-retinal. After hydrolysis of the Schiff base and release of the covalently bound all-trans-retinal, active rhodopsin is regenerated by binding of a fresh molecule of 11-cis-retinal.

The protein localises to the membrane. Its subcellular location is the cell projection. It is found in the cilium. The protein resides in the photoreceptor outer segment. Its function is as follows. Photoreceptor required for image-forming vision at low light intensity. Required for photoreceptor cell viability after birth. Light-induced isomerization of 11-cis to all-trans retinal triggers a conformational change that activates signaling via G-proteins. Subsequent receptor phosphorylation mediates displacement of the bound G-protein alpha subunit by the arrestin SAG and terminates signaling. In Felis catus (Cat), this protein is Rhodopsin (RHO).